The primary structure comprises 121 residues: Large ribosomal subunit protein bL20 (121 aa).

It belongs to the bacterial ribosomal protein bL20 family.

In terms of biological role, binds directly to 23S ribosomal RNA and is necessary for the in vitro assembly process of the 50S ribosomal subunit. It is not involved in the protein synthesizing functions of that subunit. The protein is Large ribosomal subunit protein bL20 (rplT) of Chlamydia pneumoniae (Chlamydophila pneumoniae).